Reading from the N-terminus, the 473-residue chain is ATP synthase subunit beta (473 aa).

158 to 165 (GGAGVGKT) contributes to the ATP binding site.

The protein belongs to the ATPase alpha/beta chains family. F-type ATPases have 2 components, CF(1) - the catalytic core - and CF(0) - the membrane proton channel. CF(1) has five subunits: alpha(3), beta(3), gamma(1), delta(1), epsilon(1). CF(0) has three main subunits: a(1), b(2) and c(9-12). The alpha and beta chains form an alternating ring which encloses part of the gamma chain. CF(1) is attached to CF(0) by a central stalk formed by the gamma and epsilon chains, while a peripheral stalk is formed by the delta and b chains.

It is found in the cell membrane. It catalyses the reaction ATP + H2O + 4 H(+)(in) = ADP + phosphate + 5 H(+)(out). Functionally, produces ATP from ADP in the presence of a proton gradient across the membrane. The catalytic sites are hosted primarily by the beta subunits. This is ATP synthase subunit beta from Geobacillus thermodenitrificans (strain NG80-2).